The following is a 426-amino-acid chain: Zinc finger CCCH domain-containing protein 13 (426 aa).

Residues 10–36 (AYKTKLCALWQRGNCNRDTCSFAHGHG) form a C3H1-type zinc finger. Disordered stretches follow at residues 34 to 155 (GHGD…HEKQ), 253 to 317 (NEEG…DKTS), and 390 to 426 (NDAD…VDVE). Basic and acidic residues-rich tracts occupy residues 54-70 (RRDY…DRRF), 78-101 (PGRE…RDSS), and 108-120 (RKSE…KTDD). The span at 124 to 133 (NSSRSLSLSD) shows a compositional bias: low complexity. A compositionally biased stretch (basic and acidic residues) spans 135 to 155 (NDEKKKDKFSSGDEKEDHEKQ). Residues 144–245 (SSGDEKEDHE…FERLGDLLAS (102 aa)) adopt a coiled-coil conformation. Polar residues predominate over residues 255–272 (EGSSVNEDLNERSPNTAA). Basic and acidic residues predominate over residues 284–317 (EEAKAVKKRRERDSDTMTRSDKYRSDVTDFDKTS). Positions 416-426 (YEGDDEEVDVE) are enriched in acidic residues.

The protein is Zinc finger CCCH domain-containing protein 13 of Oryza sativa subsp. japonica (Rice).